A 122-amino-acid chain; its full sequence is UPF0102 protein RL0336 (122 aa).

This sequence belongs to the UPF0102 family.

The sequence is that of UPF0102 protein RL0336 from Rhizobium johnstonii (strain DSM 114642 / LMG 32736 / 3841) (Rhizobium leguminosarum bv. viciae).